Here is an 83-residue protein sequence, read N- to C-terminus: Antitoxin ChpS (83 aa).

The SpoVT-AbrB domain maps to 3–48 (ITIKRWGNSAGMVIPNIVMKELNLQPGQSVEAQVSNNQLILTPISR).

This sequence belongs to the PemI family. Interacts with ChpB, inhibiting its endoribonuclease activity.

Antitoxin component of a type II toxin-antitoxin (TA) system. May be involved in the regulation of cell growth. It acts as a suppressor of the endoribonuclease (inhibitory function) of ChpB protein. Both ChpS and ChpB probably bind to the promoter region of the chpS-chpB operon to autoregulate their synthesis. The protein is Antitoxin ChpS (chpS) of Escherichia coli (strain K12).